Reading from the N-terminus, the 933-residue chain is Neuronal PAS domain-containing protein 4A (933 aa).

Positions 1–13 (MYRSTKGASKARR) are basic motif; degenerate. Residues 1–53 (MYRSTKGASKARRDQINAEIRNLKDLLPISDADKSRLSYLHIMSLACMYTRKS) form the bHLH domain. The tract at residues 14 to 53 (DQINAEIRNLKDLLPISDADKSRLSYLHIMSLACMYTRKS) is helix-loop-helix motif. PAS domains lie at 74–148 (SFYE…PDTD) and 220–290 (TSAS…LREG). Residues 295-334 (AEMVVRVETADHSWVWLYMVLQLETGETPIVSNNYIISET) form the PAC domain. The span at 361–398 (QESVSLQSPETLSSPDQVFTPGSSGLSGQSFDFSTAAC) shows a compositional bias: polar residues. Disordered regions lie at residues 361–451 (QESV…ASSP), 514–573 (GSNF…LSSL), and 750–776 (DLSS…PSTP). Composition is skewed to low complexity over residues 399-411 (STGS…GSSS), 440-451 (EPMASPSSASSP), 538-560 (GQTA…SNPQ), and 751-769 (LSSS…HSSP).

As to quaternary structure, efficient DNA binding requires dimerization with another bHLH protein. Brain-specific.

It is found in the nucleus. Its function is as follows. Transcription factor expressed in neurons of the brain that regulates the excitatory-inhibitory balance within neural circuits and is required for contextual memory in the hippocampus. Plays a key role in the structural and functional plasticity of neurons. Acts as an early-response transcription factor in both excitatory and inhibitory neurons, where it induces distinct but overlapping sets of late-response genes in these two types of neurons, allowing the synapses that form on inhibitory and excitatory neurons to be modified by neuronal activity in a manner specific to their function within a circuit, thereby facilitating appropriate circuit responses to sensory experience. This chain is Neuronal PAS domain-containing protein 4A (npas4a), found in Danio rerio (Zebrafish).